The sequence spans 185 residues: Ribosome-recycling factor (185 aa).

It belongs to the RRF family.

The protein localises to the cytoplasm. Its function is as follows. Responsible for the release of ribosomes from messenger RNA at the termination of protein biosynthesis. May increase the efficiency of translation by recycling ribosomes from one round of translation to another. This chain is Ribosome-recycling factor, found in Shewanella denitrificans (strain OS217 / ATCC BAA-1090 / DSM 15013).